The chain runs to 204 residues: Guanylate kinase (204 aa).

A Guanylate kinase-like domain is found at 18–196; the sequence is PKLFTISAPA…SYEVLKSIFI (179 aa). 25-32 lines the ATP pocket; the sequence is APAGAGKT.

It belongs to the guanylate kinase family.

It is found in the cytoplasm. It catalyses the reaction GMP + ATP = GDP + ADP. In terms of biological role, essential for recycling GMP and indirectly, cGMP. The sequence is that of Guanylate kinase from Chlamydia abortus (strain DSM 27085 / S26/3) (Chlamydophila abortus).